Here is a 302-residue protein sequence, read N- to C-terminus: Segregation and condensation protein A (302 aa).

Belongs to the ScpA family. As to quaternary structure, component of a cohesin-like complex composed of ScpA, ScpB and the Smc homodimer, in which ScpA and ScpB bind to the head domain of Smc. The presence of the three proteins is required for the association of the complex with DNA.

It localises to the cytoplasm. Functionally, participates in chromosomal partition during cell division. May act via the formation of a condensin-like complex containing Smc and ScpB that pull DNA away from mid-cell into both cell halves. The chain is Segregation and condensation protein A from Xylella fastidiosa (strain 9a5c).